The chain runs to 170 residues: Putative phosphoesterase OB1230 (170 aa).

His34 acts as the Proton donor in catalysis. Short sequence motifs (HXTX) lie at residues 34–37 (HLTL) and 115–118 (HITI). Catalysis depends on His115, which acts as the Proton acceptor.

This sequence belongs to the 2H phosphoesterase superfamily. YjcG family.

This is Putative phosphoesterase OB1230 from Oceanobacillus iheyensis (strain DSM 14371 / CIP 107618 / JCM 11309 / KCTC 3954 / HTE831).